The chain runs to 515 residues: Rop guanine nucleotide exchange factor 12 (515 aa).

The region spanning 83-446 (QARERQLLAD…RAGNKRNTPL (364 aa)) is the PRONE domain. Phosphoserine is present on Ser-510.

Interacts (via C-terminus) with PRK2. Interacts with PRK6. Expressed in pollen grains.

It localises to the cytoplasm. Its subcellular location is the cell membrane. Phosphorylation at Ser-510 by PRK2 may release ROPGEF12 auto-inhibition, thereby activating ROPGEF12 and downstream Rop signaling. Guanine-nucleotide exchange factor (GEF) that acts as an activator of Rop (Rho of plants) GTPases by promoting the exchange of GDP for GTP. May be recruited by PRK2 at the plasma membrane to maintain polar Rop activity in the pollen tube and control polarized pollen tube growth. This is Rop guanine nucleotide exchange factor 12 from Arabidopsis thaliana (Mouse-ear cress).